Here is a 123-residue protein sequence, read N- to C-terminus: Small ribosomal subunit protein uS12 (123 aa).

Aspartate 89 is modified (3-methylthioaspartic acid). Residues 104 to 123 (SVGVKDRKKSRSKYGAKRPK) are disordered. A compositionally biased stretch (basic residues) spans 109 to 123 (DRKKSRSKYGAKRPK).

This sequence belongs to the universal ribosomal protein uS12 family. In terms of assembly, part of the 30S ribosomal subunit. Contacts proteins S8 and S17. May interact with IF1 in the 30S initiation complex.

With S4 and S5 plays an important role in translational accuracy. Its function is as follows. Interacts with and stabilizes bases of the 16S rRNA that are involved in tRNA selection in the A site and with the mRNA backbone. Located at the interface of the 30S and 50S subunits, it traverses the body of the 30S subunit contacting proteins on the other side and probably holding the rRNA structure together. The combined cluster of proteins S8, S12 and S17 appears to hold together the shoulder and platform of the 30S subunit. This Geotalea daltonii (strain DSM 22248 / JCM 15807 / FRC-32) (Geobacter daltonii) protein is Small ribosomal subunit protein uS12.